The sequence spans 968 residues: RNA polymerase-associated protein RapA (968 aa).

In terms of domain architecture, Helicase ATP-binding spans 163–332 (EVGSRYAPRV…FARLRLLDPD (170 aa)). 176 to 183 (DEVGLGKT) lines the ATP pocket. Residues 278–281 (DEAH) carry the DEAH box motif. One can recognise a Helicase C-terminal domain in the interval 491–655 (RVDWLIEFLK…EFADELINVL (165 aa)).

This sequence belongs to the SNF2/RAD54 helicase family. RapA subfamily. In terms of assembly, interacts with the RNAP. Has a higher affinity for the core RNAP than for the holoenzyme. Its ATPase activity is stimulated by binding to RNAP.

Transcription regulator that activates transcription by stimulating RNA polymerase (RNAP) recycling in case of stress conditions such as supercoiled DNA or high salt concentrations. Probably acts by releasing the RNAP, when it is trapped or immobilized on tightly supercoiled DNA. Does not activate transcription on linear DNA. Probably not involved in DNA repair. The protein is RNA polymerase-associated protein RapA of Shewanella frigidimarina (strain NCIMB 400).